The following is a 159-amino-acid chain: Endoribonuclease YbeY (159 aa).

Positions 126, 130, and 136 each coordinate Zn(2+).

Belongs to the endoribonuclease YbeY family. Zn(2+) serves as cofactor.

It is found in the cytoplasm. In terms of biological role, single strand-specific metallo-endoribonuclease involved in late-stage 70S ribosome quality control and in maturation of the 3' terminus of the 16S rRNA. The sequence is that of Endoribonuclease YbeY from Thermodesulfovibrio yellowstonii (strain ATCC 51303 / DSM 11347 / YP87).